Here is a 271-residue protein sequence, read N- to C-terminus: Potential ATP-binding protein (271 aa).

34–41 (GQPGVGKT) serves as a coordination point for ATP.

The chain is Potential ATP-binding protein from Staphylococcus aureus.